Here is a 125-residue protein sequence, read N- to C-terminus: S-adenosylmethionine decarboxylase proenzyme (125 aa).

Ser-71 (schiff-base intermediate with substrate; via pyruvic acid) is an active-site residue. Pyruvic acid (Ser); by autocatalysis is present on Ser-71. Residue His-76 is the Proton acceptor; for processing activity of the active site. Residue Cys-91 is the Proton donor; for catalytic activity of the active site.

It belongs to the prokaryotic AdoMetDC family. Type 1 subfamily. Heterotetramer of two alpha and two beta chains arranged as a dimer of alpha/beta heterodimers. Pyruvate serves as cofactor. In terms of processing, is synthesized initially as an inactive proenzyme. Formation of the active enzyme involves a self-maturation process in which the active site pyruvoyl group is generated from an internal serine residue via an autocatalytic post-translational modification. Two non-identical subunits are generated from the proenzyme in this reaction, and the pyruvate is formed at the N-terminus of the alpha chain, which is derived from the carboxyl end of the proenzyme. The post-translation cleavage follows an unusual pathway, termed non-hydrolytic serinolysis, in which the side chain hydroxyl group of the serine supplies its oxygen atom to form the C-terminus of the beta chain, while the remainder of the serine residue undergoes an oxidative deamination to produce ammonia and the pyruvoyl group blocking the N-terminus of the alpha chain.

It carries out the reaction S-adenosyl-L-methionine + H(+) = S-adenosyl 3-(methylsulfanyl)propylamine + CO2. The protein operates within amine and polyamine biosynthesis; S-adenosylmethioninamine biosynthesis; S-adenosylmethioninamine from S-adenosyl-L-methionine: step 1/1. Functionally, catalyzes the decarboxylation of S-adenosylmethionine to S-adenosylmethioninamine (dcAdoMet), the propylamine donor required for the synthesis of the polyamines spermine and spermidine from the diamine putrescine. In Pyrobaculum arsenaticum (strain DSM 13514 / JCM 11321 / PZ6), this protein is S-adenosylmethionine decarboxylase proenzyme.